The primary structure comprises 274 residues: Imidazole glycerol phosphate synthase subunit HisF (274 aa).

Active-site residues include aspartate 11 and aspartate 134.

This sequence belongs to the HisA/HisF family. Heterodimer of HisH and HisF.

The protein localises to the cytoplasm. It catalyses the reaction 5-[(5-phospho-1-deoxy-D-ribulos-1-ylimino)methylamino]-1-(5-phospho-beta-D-ribosyl)imidazole-4-carboxamide + L-glutamine = D-erythro-1-(imidazol-4-yl)glycerol 3-phosphate + 5-amino-1-(5-phospho-beta-D-ribosyl)imidazole-4-carboxamide + L-glutamate + H(+). Its pathway is amino-acid biosynthesis; L-histidine biosynthesis; L-histidine from 5-phospho-alpha-D-ribose 1-diphosphate: step 5/9. IGPS catalyzes the conversion of PRFAR and glutamine to IGP, AICAR and glutamate. The HisF subunit catalyzes the cyclization activity that produces IGP and AICAR from PRFAR using the ammonia provided by the HisH subunit. The polypeptide is Imidazole glycerol phosphate synthase subunit HisF (Methanobrevibacter smithii (strain ATCC 35061 / DSM 861 / OCM 144 / PS)).